The chain runs to 486 residues: MAHRLLRDAQADGWERSDFPIICESCLGDNPYVRMLRAEYDKECKICARPFTVFRWRPGRDARYKKTEICQTCCKLKNVCQVCLLDLEYGLPVQVRDTALSTNSNDAIPRSDVNREYFAEEHDRRARAGIDYDSSNGKARANDTILKLQRTAPYYKRNRAHVCSFYVRGECTRGAECPYRHEMPETGELSQQNIKDRYYGVNDPVALKLLSKAGEMPSLTPPDDESIRTLYIGGLDSRVTEQDLRDQFYAHGEIETIRMVLQRACAFVTYTTREGAEKAAEELANKLVIKGVRLKLMWGKPQAPKPEEDEAGRQGHVAHGGMLPRAVISQQQSGDQPQPPGMEGQQQPASASYYFNIPAPPAAERTLYPSMDPQRMGALVESQEGDGKPGPQQAGQGQASSSSGQSYPEPPPPYYHGGQYPPYYPPYGGYMPPPRMPYQQPPQYPAYQPMLAPPAQSQASSLQQPAPATQQLGQGPQQQTTQNGMT.

The C3H1-type zinc-finger motif lies at 157–184; the sequence is RNRAHVCSFYVRGECTRGAECPYRHEMP. The region spanning 228 to 301 is the RRM domain; the sequence is RTLYIGGLDS…VRLKLMWGKP (74 aa). 2 disordered regions span residues 329–348 and 379–486; these read SQQQSGDQPQPPGMEGQQQP and LVES…NGMT. Composition is skewed to low complexity over residues 389 to 407 and 415 to 430; these read PGPQQAGQGQASSSSGQSY and YHGGQYPPYYPPYGGY. Over residues 431–444 the composition is skewed to pro residues; that stretch reads MPPPRMPYQQPPQY. The span at 445 to 486 shows a compositional bias: low complexity; sequence PAYQPMLAPPAQSQASSLQQPAPATQQLGQGPQQQTTQNGMT.

The protein is Zinc finger CCCH domain-containing protein 49 of Oryza sativa subsp. japonica (Rice).